We begin with the raw amino-acid sequence, 250 residues long: Pyridoxine 5'-phosphate synthase (250 aa).

Asn8 and Arg19 together coordinate 3-amino-2-oxopropyl phosphate. The active-site Proton acceptor is His44. Residues Arg46 and His51 each coordinate 1-deoxy-D-xylulose 5-phosphate. Glu76 functions as the Proton acceptor in the catalytic mechanism. Residue Thr106 participates in 1-deoxy-D-xylulose 5-phosphate binding. Catalysis depends on His200, which acts as the Proton donor. Residues Asp201 and 223–224 (GH) each bind 3-amino-2-oxopropyl phosphate.

The protein belongs to the PNP synthase family. As to quaternary structure, homooctamer; tetramer of dimers.

Its subcellular location is the cytoplasm. The catalysed reaction is 3-amino-2-oxopropyl phosphate + 1-deoxy-D-xylulose 5-phosphate = pyridoxine 5'-phosphate + phosphate + 2 H2O + H(+). It participates in cofactor biosynthesis; pyridoxine 5'-phosphate biosynthesis; pyridoxine 5'-phosphate from D-erythrose 4-phosphate: step 5/5. In terms of biological role, catalyzes the complicated ring closure reaction between the two acyclic compounds 1-deoxy-D-xylulose-5-phosphate (DXP) and 3-amino-2-oxopropyl phosphate (1-amino-acetone-3-phosphate or AAP) to form pyridoxine 5'-phosphate (PNP) and inorganic phosphate. The sequence is that of Pyridoxine 5'-phosphate synthase from Allorhizobium ampelinum (strain ATCC BAA-846 / DSM 112012 / S4) (Agrobacterium vitis (strain S4)).